An 863-amino-acid chain; its full sequence is Cilia- and flagella-associated protein 58 (863 aa).

Coiled coils occupy residues 107–600 (TVKE…NERD) and 631–815 (QSQY…KQVF). Residues 836–863 (GPSLLDQLPGGSGTGSGGMATGGGVGMS) are disordered. The span at 845-863 (GGSGTGSGGMATGGGVGMS) shows a compositional bias: gly residues.

This sequence belongs to the CFAP58 family.

The protein localises to the cell projection. It is found in the cilium. It localises to the flagellum. In Chlamydomonas reinhardtii (Chlamydomonas smithii), this protein is Cilia- and flagella-associated protein 58.